The primary structure comprises 93 residues: Large ribosomal subunit protein bL31 (93 aa).

Positions 68–93 (GSADAAADEKKTDAKNNNKDNTSKED) are disordered. The segment covering 74–93 (ADEKKTDAKNNNKDNTSKED) has biased composition (basic and acidic residues).

Belongs to the bacterial ribosomal protein bL31 family. Type A subfamily. Part of the 50S ribosomal subunit.

Functionally, binds the 23S rRNA. The polypeptide is Large ribosomal subunit protein bL31 (Prochlorococcus marinus (strain MIT 9303)).